Consider the following 517-residue polypeptide: GMP synthase [glutamine-hydrolyzing] (517 aa).

The Glutamine amidotransferase type-1 domain maps to 11-202; that stretch reads KIIVLDYGSQ…AFDVCHAEAN (192 aa). Cysteine 88 (nucleophile) is an active-site residue. Residues histidine 176 and glutamate 178 contribute to the active site. In terms of domain architecture, GMPS ATP-PPase spans 203–392; sequence WSMDDFITKQ…LGMPHSLVWR (190 aa). An ATP-binding site is contributed by 230 to 236; it reads SGGVDSS.

Homodimer.

The catalysed reaction is XMP + L-glutamine + ATP + H2O = GMP + L-glutamate + AMP + diphosphate + 2 H(+). Its pathway is purine metabolism; GMP biosynthesis; GMP from XMP (L-Gln route): step 1/1. Catalyzes the synthesis of GMP from XMP. This Lacticaseibacillus rhamnosus (Lactobacillus rhamnosus) protein is GMP synthase [glutamine-hydrolyzing] (guaA).